Reading from the N-terminus, the 282-residue chain is MRTTISQLKEMKQNKQKIAMLTAYDYPTAQILDKAGIPAILVGDSLGMVVLGYDSTVSVTMEDMLHHLKAVVRGSQKAMVIADMPFMTYHLSPEQALLNAGRFMQEGGAQAVKLEGGVNVADKVKRIVDCGIPVMGHIGLTPQSVNQLSGFKVQGKTLTAALALLEDARALEKAGAFAIVLETMPAELAAMITAAVSIPTIGIGAGENCDGQVQVVSDMLGMFTDFVPKHTKKYADLNGIISKAVSGYVTEVAKGEFPTLKESFTLDKKVLEELKKCVSSEQ.

The Mg(2+) site is built by Asp44 and Asp83. Residues 44–45 (DS), Asp83, and Lys113 each bind 3-methyl-2-oxobutanoate. Glu115 is a binding site for Mg(2+). Glu182 (proton acceptor) is an active-site residue.

It belongs to the PanB family. Homodecamer; pentamer of dimers. Mg(2+) is required as a cofactor.

The protein localises to the cytoplasm. The catalysed reaction is 3-methyl-2-oxobutanoate + (6R)-5,10-methylene-5,6,7,8-tetrahydrofolate + H2O = 2-dehydropantoate + (6S)-5,6,7,8-tetrahydrofolate. Its pathway is cofactor biosynthesis; (R)-pantothenate biosynthesis; (R)-pantoate from 3-methyl-2-oxobutanoate: step 1/2. Its function is as follows. Catalyzes the reversible reaction in which hydroxymethyl group from 5,10-methylenetetrahydrofolate is transferred onto alpha-ketoisovalerate to form ketopantoate. This chain is 3-methyl-2-oxobutanoate hydroxymethyltransferase, found in Dehalococcoides mccartyi (strain ATCC BAA-2266 / KCTC 15142 / 195) (Dehalococcoides ethenogenes (strain 195)).